The following is a 479-amino-acid chain: Replication factor C large subunit (479 aa).

56–63 (GPPGVGKT) contributes to the ATP binding site. Residues 435 to 461 (LGEKPLEPQEAKARRRGEKASRDEGRK) are compositionally biased toward basic and acidic residues. The disordered stretch occupies residues 435–479 (LGEKPLEPQEAKARRRGEKASRDEGRKAGKRERKGVGLDFFLGEQ).

Belongs to the activator 1 small subunits family. RfcL subfamily. In terms of assembly, heteromultimer composed of small subunits (RfcS) and large subunits (RfcL).

Part of the RFC clamp loader complex which loads the PCNA sliding clamp onto DNA. This is Replication factor C large subunit from Aeropyrum pernix (strain ATCC 700893 / DSM 11879 / JCM 9820 / NBRC 100138 / K1).